Here is a 342-residue protein sequence, read N- to C-terminus: L-threonine 3-dehydrogenase (342 aa).

Residue cysteine 38 coordinates Zn(2+). Catalysis depends on charge relay system residues threonine 40 and histidine 43. Zn(2+) is bound by residues histidine 63, glutamate 64, cysteine 93, cysteine 96, cysteine 99, and cysteine 107. NAD(+)-binding positions include isoleucine 175, aspartate 195, arginine 200, 262-264 (LGL), and 286-287 (IY).

Belongs to the zinc-containing alcohol dehydrogenase family. Homotetramer. It depends on Zn(2+) as a cofactor.

Its subcellular location is the cytoplasm. It carries out the reaction L-threonine + NAD(+) = (2S)-2-amino-3-oxobutanoate + NADH + H(+). It participates in amino-acid degradation; L-threonine degradation via oxydo-reductase pathway; glycine from L-threonine: step 1/2. Functionally, catalyzes the NAD(+)-dependent oxidation of L-threonine to 2-amino-3-ketobutyrate. This Streptomyces avermitilis (strain ATCC 31267 / DSM 46492 / JCM 5070 / NBRC 14893 / NCIMB 12804 / NRRL 8165 / MA-4680) protein is L-threonine 3-dehydrogenase.